The chain runs to 305 residues: Probable xyloglucan endotransglucosylase/hydrolase protein 8 (305 aa).

Positions 1–31 are cleaved as a signal peptide; it reads METERRIITSCSAMTALFLFMTALMASSSIA. The region spanning 32-231 is the GH16 domain; the sequence is ATPTQSFEDN…WKKAPFVSSY (200 aa). N-linked (GlcNAc...) asparagine glycans are attached at residues Asn-61 and Asn-66. Glu-115 (nucleophile) is an active-site residue. The active-site Proton donor is Glu-119. Glu-119 is a xyloglucan binding site. Asn-123 carries an N-linked (GlcNAc...) asparagine glycan. 132–134 contacts xyloglucan; the sequence is QTN. Residue Asn-138 is glycosylated (N-linked (GlcNAc...) asparagine). Xyloglucan contacts are provided by residues 142-144, 210-211, and Gly-215; these read NRE and DW. 2 disulfide bridges follow: Cys-239-Cys-248 and Cys-286-Cys-299. Arg-291 is a xyloglucan binding site.

The protein belongs to the glycosyl hydrolase 16 family. XTH group 1 subfamily. Contains at least one intrachain disulfide bond essential for its enzymatic activity.

It is found in the secreted. Its subcellular location is the cell wall. The protein localises to the extracellular space. It localises to the apoplast. The catalysed reaction is breaks a beta-(1-&gt;4) bond in the backbone of a xyloglucan and transfers the xyloglucanyl segment on to O-4 of the non-reducing terminal glucose residue of an acceptor, which can be a xyloglucan or an oligosaccharide of xyloglucan.. In terms of biological role, catalyzes xyloglucan endohydrolysis (XEH) and/or endotransglycosylation (XET). Cleaves and religates xyloglucan polymers, an essential constituent of the primary cell wall, and thereby participates in cell wall construction of growing tissues. This Arabidopsis thaliana (Mouse-ear cress) protein is Probable xyloglucan endotransglucosylase/hydrolase protein 8 (XTH8).